The sequence spans 278 residues: Checkpoint protein HUS1B (278 aa).

The protein belongs to the HUS1 family. As to quaternary structure, interacts with RAD1 and RAD9B. In terms of tissue distribution, expressed strongly in testis, less in spleen, thymus, prostate, colon and leukocytes.

This is Checkpoint protein HUS1B (HUS1B) from Homo sapiens (Human).